The primary structure comprises 237 residues: Probable glutathione-independent glyoxalase HSP32 (237 aa).

Residues cysteine 138, histidine 139, and glutamate 170 contribute to the active site.

The protein belongs to the peptidase C56 family. HSP31-like subfamily. In terms of assembly, homodimer.

Its subcellular location is the cytoplasm. It localises to the P-body. It catalyses the reaction methylglyoxal + H2O = (R)-lactate + H(+). Functionally, catalyzes the conversion of methylglyoxal (MG) to D-lactate in a single glutathione (GSH)-independent step. May play a role in detoxifying endogenously produced glyoxals. Involved in protection against reactive oxygen species (ROS). Important for viability in stationary phase. May negatively regulate TORC1 in response to nutrient limitation. This chain is Probable glutathione-independent glyoxalase HSP32, found in Saccharomyces cerevisiae (strain ATCC 204508 / S288c) (Baker's yeast).